Consider the following 449-residue polypeptide: Phosphoglucosamine mutase (449 aa).

Serine 101 serves as the catalytic Phosphoserine intermediate. Positions 101, 243, 245, and 247 each coordinate Mg(2+). A Phosphoserine modification is found at serine 101.

Belongs to the phosphohexose mutase family. Requires Mg(2+) as cofactor. In terms of processing, activated by phosphorylation.

The catalysed reaction is alpha-D-glucosamine 1-phosphate = D-glucosamine 6-phosphate. Catalyzes the conversion of glucosamine-6-phosphate to glucosamine-1-phosphate. This is Phosphoglucosamine mutase from Syntrophus aciditrophicus (strain SB).